The chain runs to 252 residues: Thiazole synthase (252 aa).

Catalysis depends on lysine 91, which acts as the Schiff-base intermediate with DXP. 1-deoxy-D-xylulose 5-phosphate-binding positions include glycine 152, 179–180, and 201–202; these read AG and NT.

This sequence belongs to the ThiG family. As to quaternary structure, homotetramer. Forms heterodimers with either ThiH or ThiS.

It localises to the cytoplasm. The catalysed reaction is [ThiS sulfur-carrier protein]-C-terminal-Gly-aminoethanethioate + 2-iminoacetate + 1-deoxy-D-xylulose 5-phosphate = [ThiS sulfur-carrier protein]-C-terminal Gly-Gly + 2-[(2R,5Z)-2-carboxy-4-methylthiazol-5(2H)-ylidene]ethyl phosphate + 2 H2O + H(+). The protein operates within cofactor biosynthesis; thiamine diphosphate biosynthesis. Functionally, catalyzes the rearrangement of 1-deoxy-D-xylulose 5-phosphate (DXP) to produce the thiazole phosphate moiety of thiamine. Sulfur is provided by the thiocarboxylate moiety of the carrier protein ThiS. In vitro, sulfur can be provided by H(2)S. This Erwinia amylovora (Fire blight bacteria) protein is Thiazole synthase.